A 528-amino-acid polypeptide reads, in one-letter code: Protein BFR2 (528 aa).

Disordered stretches follow at residues 14-158 (NKSK…ADAK) and 372-401 (DSNS…NNAI). The segment covering 132–146 (DSGDSDSDSGSDAGE) has biased composition (acidic residues).

Belongs to the AATF family.

It localises to the nucleus. The protein resides in the nucleolus. The polypeptide is Protein BFR2 (BFR2) (Eremothecium gossypii (strain ATCC 10895 / CBS 109.51 / FGSC 9923 / NRRL Y-1056) (Yeast)).